We begin with the raw amino-acid sequence, 541 residues long: Arginine-containing cyclodipeptide synthase avaA (541 aa).

Residues 428–432 (DDIAE) carry the Conserved DDXXE motif motif.

It belongs to the arginine-containing cyclodipeptide synthase family.

The enzyme catalyses L-tryptophyl-tRNA(Trp) + L-arginyl-tRNA(Arg) = cyclo(L-arginyl-L-tryptophyl) + tRNA(Trp) + tRNA(Arg) + H(+). It participates in secondary metabolite biosynthesis. Functionally, arginine-containing cyclodipeptide synthase; part of the cluster that mediates the biosynthesis of a highly modified cyclo-arginine-tryptophan dipeptide (cRW). Within the pathway, avaA acts as the scaffold-generating enzyme and is responsible for formation of the cyclo-Arg-Trp diketopiperazine (cRW) from L-arginyl-tRNA(Arg) + L-tryptophanyl-tRNA(Trp). AvaB then acts as a multifunctional flavoenzyme that is responsible for generating the cyclo-Arg-formylkynurenine DKP, which can be deformylated by avaC. AvaB then catalyzes an additional N-oxidation followed by cyclization and dehydration. The next step is an N-acetylation of the guanidine group catalyzed by the arginine N-acetyltransferase AvaD. The role of the additional enzymes identified within the ava cluster still have to be determined. The chain is Arginine-containing cyclodipeptide synthase avaA from Aspergillus versicolor.